The primary structure comprises 150 residues: Globin-3 (150 aa).

A Globin domain is found at Pro-11–Tyr-150. Heme b-binding residues include His-74 and His-106.

Belongs to the globin family. In terms of assembly, monomer.

The chain is Globin-3 from Petromyzon marinus (Sea lamprey).